The sequence spans 396 residues: Serine/threonine-protein kinase VRK1 (396 aa).

The region spanning 37–317 (WKLGSPIGQG…LLDYVEKPLY (281 aa)) is the Protein kinase domain. ATP-binding positions include 43–51 (IGQGGFGCI) and Lys-71. A Glycyl lysine isopeptide (Lys-Gly) (interchain with G-Cter in SUMO2) cross-link involves residue Lys-71. The active-site Proton acceptor is the Asp-177. Residues 352-396 (KPVAKKRKKEAEESVESSVEDMECSDKQTEEATQTRSKTRKRVQK) form a disordered region. Positions 364-374 (ESVESSVEDME) are enriched in acidic residues. The residue at position 376 (Ser-376) is a Phosphoserine. Positions 387–393 (RSKTRKR) are required for interaction with the nucleosome.

Belongs to the protein kinase superfamily. CK1 Ser/Thr protein kinase family. VRK subfamily. In terms of assembly, interacts with HDAC1, KAT2B, SETDB1, KDM3A and KDM4A. Associates with the nucleosome through interactions with nucleosome DNA, histone H2A and histone H2B; the interaction with H2A and H2B is mediated by the nucleosome acidic patch, a cluster of negatively charged residues of H2A and H2B forming a cleft within the nucleosome core. In terms of processing, autophosphorylated at various serine and threonine residues. Autophosphorylation does not impair its ability to phosphorylate p53/TP53. Phosphorylation by PLK3 leads to induction of Golgi fragmentation during mitosis.

It is found in the nucleus. Its subcellular location is the cytoplasm. It localises to the cajal body. The enzyme catalyses L-seryl-[protein] + ATP = O-phospho-L-seryl-[protein] + ADP + H(+). It carries out the reaction L-threonyl-[protein] + ATP = O-phospho-L-threonyl-[protein] + ADP + H(+). Active in presence of Mn(2+), Mg(2+) and Zn(2+), but is not functional with Ca(2+) or Cu(2+). Has a higher affinity for Mn(2+) than for Mg(2+). RAN inhibits its autophosphorylation and its ability to phosphorylate histone H3. Serine/threonine kinase involved in the regulation of key cellular processes including the cell cycle, nuclear condensation, transcription regulation, and DNA damage response. Controls chromatin organization and remodeling by mediating phosphorylation of histone H3 on 'Thr-4' and histone H2AX (H2aXT4ph). It also phosphorylates KAT5 in response to DNA damage, promoting KAT5 association with chromatin and histone acetyltransferase activity. Is involved in the regulation of cell cycle progression of neural progenitors, and is required for proper cortical neuronal migration. Is involved in neurite elongation and branching in motor neurons, and has an essential role in Cajal bodies assembly, acting through COIL phosphorylation and the control of coilin degradation. Involved in Golgi disassembly during the cell cycle: following phosphorylation by PLK3 during mitosis, it is required to induce Golgi fragmentation. Phosphorylates BANF1: disrupts its ability to bind DNA, reduces its binding to LEM domain-containing proteins and causes its relocalization from the nucleus to the cytoplasm. Phosphorylates TP53BP1 and p53/TP53 on 'Thr-18', preventing the interaction between p53/TP53 and MDM2. Phosphorylates ATF2 which activates its transcriptional activity. Phosphorylates JUN. The sequence is that of Serine/threonine-protein kinase VRK1 (VRK1) from Bos taurus (Bovine).